The sequence spans 86 residues: Small ribosomal subunit protein bS16 (86 aa).

This sequence belongs to the bacterial ribosomal protein bS16 family.

This chain is Small ribosomal subunit protein bS16, found in Trichormus variabilis (strain ATCC 29413 / PCC 7937) (Anabaena variabilis).